The primary structure comprises 206 residues: dITP/XTP pyrophosphatase (206 aa).

A substrate-binding site is contributed by 10-15 (SGNAGK). Mg(2+) is bound by residues Glu40 and Asp69. The Proton acceptor role is filled by Asp69. Residues Ser70, 148–151 (FGYD), Lys171, and 176–177 (HR) each bind substrate.

This sequence belongs to the HAM1 NTPase family. Homodimer. The cofactor is Mg(2+).

The enzyme catalyses XTP + H2O = XMP + diphosphate + H(+). The catalysed reaction is dITP + H2O = dIMP + diphosphate + H(+). It catalyses the reaction ITP + H2O = IMP + diphosphate + H(+). In terms of biological role, pyrophosphatase that catalyzes the hydrolysis of nucleoside triphosphates to their monophosphate derivatives, with a high preference for the non-canonical purine nucleotides XTP (xanthosine triphosphate), dITP (deoxyinosine triphosphate) and ITP. Seems to function as a house-cleaning enzyme that removes non-canonical purine nucleotides from the nucleotide pool, thus preventing their incorporation into DNA/RNA and avoiding chromosomal lesions. In Synechococcus sp. (strain CC9311), this protein is dITP/XTP pyrophosphatase.